A 307-amino-acid chain; its full sequence is Ribosomal RNA small subunit methyltransferase H (307 aa).

S-adenosyl-L-methionine-binding positions include 32–34, aspartate 52, phenylalanine 78, aspartate 99, and glutamine 106; that span reads GGH. The interval 287–307 is disordered; sequence KEEIESNKRSHSAKLRVAEKV.

This sequence belongs to the methyltransferase superfamily. RsmH family.

The protein resides in the cytoplasm. The catalysed reaction is cytidine(1402) in 16S rRNA + S-adenosyl-L-methionine = N(4)-methylcytidine(1402) in 16S rRNA + S-adenosyl-L-homocysteine + H(+). Functionally, specifically methylates the N4 position of cytidine in position 1402 (C1402) of 16S rRNA. The protein is Ribosomal RNA small subunit methyltransferase H of Caldicellulosiruptor bescii (strain ATCC BAA-1888 / DSM 6725 / KCTC 15123 / Z-1320) (Anaerocellum thermophilum).